The primary structure comprises 270 residues: Probable ribosomal RNA small subunit methyltransferase A (270 aa).

S-adenosyl-L-methionine-binding residues include histidine 19, leucine 21, glycine 46, glutamate 67, aspartate 92, and asparagine 107.

The protein belongs to the class I-like SAM-binding methyltransferase superfamily. rRNA adenine N(6)-methyltransferase family. RsmA subfamily.

The protein localises to the cytoplasm. Its function is as follows. Specifically dimethylates two adjacent adenosines in the loop of a conserved hairpin near the 3'-end of 16S rRNA in the 30S particle. May play a critical role in biogenesis of 30S subunits. This chain is Probable ribosomal RNA small subunit methyltransferase A, found in Methanococcoides burtonii (strain DSM 6242 / NBRC 107633 / OCM 468 / ACE-M).